The following is a 284-amino-acid chain: Extracellular metalloprotease VDBG_01143 (284 aa).

The first 18 residues, 1 to 18, serve as a signal peptide directing secretion; that stretch reads MLFKSLFVAAATAVGVSG. The N-linked (GlcNAc...) asparagine glycan is linked to asparagine 58. Histidine 200 contacts Zn(2+). The active site involves glutamate 201. Histidine 204 contributes to the Zn(2+) binding site. Cysteine 236 and cysteine 263 are disulfide-bonded.

Belongs to the peptidase M43B family.

Its subcellular location is the secreted. Its function is as follows. Secreted metalloproteinase that allows assimilation of proteinaceous substrates. This chain is Extracellular metalloprotease VDBG_01143, found in Verticillium alfalfae (strain VaMs.102 / ATCC MYA-4576 / FGSC 10136) (Verticillium wilt of alfalfa).